A 726-amino-acid chain; its full sequence is NHL repeat-containing protein 2 (726 aa).

NHL repeat units lie at residues 212-254, 265-307, 335-369, 409-439, 461-505, and 518-562; these read KLYK…VWKN, NPGR…IDLE, ISSPWDVVFGRSGPEVQRDNILWIAMAGTHQIWAL, FAQPSGLSLASEGPWSCLFVADSESSTVRTV, AFGD…VDPK, and ASNM…LDLE.

As to quaternary structure, monomer.

Its subcellular location is the cytoplasm. The protein resides in the cytosol. Required for normal embryonic development. The sequence is that of NHL repeat-containing protein 2 (NHLRC2) from Bos taurus (Bovine).